A 1022-amino-acid polypeptide reads, in one-letter code: Collagen alpha-2(VI) chain (1022 aa).

The first 27 residues, 1-27, serve as a signal peptide directing secretion; the sequence is MSRRTAEMFQQAFLSTLLCVALVPLHA. The segment at 28-255 is nonhelical region; it reads QFDDEPVTSC…CYKMTCLEIA (228 aa). In terms of domain architecture, VWFA 1 spans 44–168; that stretch reads PISVYFVIDT…VITDGHVTGS (125 aa). Residues N141 and N215 are each glycosylated (N-linked (GlcNAc...) asparagine). A triple-helical region region spans residues 256 to 590; the sequence is GPAGPKGYRG…PGPPGDPGLT (335 aa). The segment at 263–587 is disordered; it reads YRGQKGAKGN…EGTPGPPGDP (325 aa). The span at 287–299 shows a compositional bias: low complexity; the sequence is DPGIEGPIGYPGP. The span at 306-318 shows a compositional bias: basic and acidic residues; it reads KGEKGEIGSDGRR. Residue N327 is glycosylated (N-linked (GlcNAc...) asparagine). 2 consecutive short sequence motifs (cell attachment site) follow at residues 348 to 350 and 366 to 368; these read RGD. Over residues 363–377 the composition is skewed to basic and acidic residues; the sequence is QGERGDEGMKGDPGR. Low complexity predominate over residues 389–399; it reads EKGSPGIPGNP. 5 consecutive short sequence motifs (cell attachment site) follow at residues 426–428, 444–446, 465–467, 489–491, and 498–500; these read RGD. The interruption in collagenous region stretch occupies residues 514-519; it reads GFSYPG. The segment covering 534–543 has biased composition (gly residues); sequence GPKGGRGELG. The segment at 591 to 1022 is nonhelical region; the sequence is DCDVMTYVRE…FFDRFIRWIC (432 aa). VWFA domains are found at residues 613–738 and 833–957; these read ALDI…YDPR and DIVF…ITGS. N630 and N897 each carry an N-linked (GlcNAc...) asparagine glycan.

Belongs to the type VI collagen family. As to quaternary structure, trimers composed of three different chains: alpha 1(VI), alpha 2(VI), and alpha 3(VI). Prolines at the third position of the tripeptide repeating unit (G-X-Y) are hydroxylated in some or all of the chains.

The protein resides in the secreted. Its subcellular location is the extracellular space. It is found in the extracellular matrix. Functionally, collagen VI acts as a cell-binding protein. The polypeptide is Collagen alpha-2(VI) chain (COL6A2) (Gallus gallus (Chicken)).